The sequence spans 260 residues: Large ribosomal subunit protein uL2 (260 aa).

A disordered region spans residues 208 to 230 (EHPHGGGNHQHIGHPSTVRRDAS).

This sequence belongs to the universal ribosomal protein uL2 family.

It localises to the cytoplasm. In Caenorhabditis elegans, this protein is Large ribosomal subunit protein uL2.